Reading from the N-terminus, the 248-residue chain is Protein G1-like6 (248 aa).

Residues 1 to 15 are compositionally biased toward basic residues; sequence MDRHHHHHHHHHHHM. Disordered stretches follow at residues 1-35, 50-84, and 198-248; these read MDRH…GATQ, GAGS…YESQ, and ARGI…FIIP. Gly residues predominate over residues 17-32; sequence SGGGQDPAAGDGGAGG. A compositionally biased stretch (low complexity) spans 50-59; that stretch reads GAGSSSSGAG. Residues 60–69 are compositionally biased toward gly residues; the sequence is TSAGGGGGGP. The segment covering 70–79 has biased composition (low complexity); the sequence is SPSSSSPSLS. One can recognise an ALOG domain in the interval 80 to 207; that stretch reads RYESQKRRDW…ARGISYEKKK (128 aa). The Nuclear localization signal motif lies at 205–209; sequence KKKRK. Composition is skewed to low complexity over residues 212–224 and 239–248; these read SSAG…SSEG and TSASPQFIIP.

This sequence belongs to the plant homeotic and developmental regulators ALOG protein family.

It is found in the nucleus. In terms of biological role, probable transcription regulator that acts as a developmental regulator by promoting cell growth in response to light. This chain is Protein G1-like6, found in Oryza sativa subsp. indica (Rice).